The sequence spans 108 residues: BH3-like motif-containing cell death inducer (108 aa).

The short motif at 5-12 is the BH3-like element; that stretch reads LPIEGQEI.

Ubiquitously expressed.

Its subcellular location is the cytoplasm. The protein localises to the mitochondrion. Its function is as follows. Functions as a proapoptotic molecule through the caspase-dependent mitochondrial pathway of cell death. The sequence is that of BH3-like motif-containing cell death inducer (BLID) from Homo sapiens (Human).